Reading from the N-terminus, the 394-residue chain is 3-ketosteroid-9-alpha-monooxygenase, oxygenase component (394 aa).

The Rieske domain maps to 27 to 129 (WHCLGLAKDF…TLDQDGLLFV (103 aa)). [2Fe-2S] cluster is bound by residues Cys-68, His-70, Cys-87, and His-90. Residues Asn-175, His-181, and His-186 each coordinate Fe cation. A substrate-binding site is contributed by Tyr-245. Asp-305 contributes to the Fe cation binding site.

As to quaternary structure, homotrimer. The two-component system 3-ketosteroid-9-alpha-monooxygenase is composed of an oxygenase component KshA and a reductase component KshB. The cofactor is [2Fe-2S] cluster. Fe cation is required as a cofactor.

The enzyme catalyses androsta-1,4-diene-3,17-dione + 2 reduced [2Fe-2S]-[ferredoxin] + O2 + 2 H(+) = 9alpha-hydroxyandrosta-1,4-diene-3,17-dione + 2 oxidized [2Fe-2S]-[ferredoxin] + H2O. May be involved in the degradation of cholic acid, a steroid acid found predominantly in the bile. In vitro, catalyzes the introduction of a 9alpha-hydroxyl moiety into the ring B of 3-ketosteroid substrates such as 1,4-androstadiene-3,17-dione (ADD), 4-androstene-3,17-dione (AD), 4-androstene-17beta-ol-3-one (testosterone), 4-pregnene-3,20-dione (progesterone), 3-oxo-23,24-bisnorcholesta-4-en-22-oate (4-BNC), 23,24-bisnorcholesta-4-ene-22-oate, 3-oxo-23,24-bisnorcholaesta-1,4-dien-22-oate (1,4-BNC), 23,24-bisnorcholesta-1,4-diene-22-oate and 3-oxo-23,24-bisnorcholesta-1,4-dien-22-oyl-coenzyme A thioester (1,4-BNC-CoA). KshA1 has the highest specificity for steroids possessing an isopropionyl side chain at C17. This is 3-ketosteroid-9-alpha-monooxygenase, oxygenase component from Rhodococcus rhodochrous.